The sequence spans 280 residues: Proteasome subunit beta 2 (280 aa).

Residues 1–52 (MTERERGQGLPAEFFAVGTASFVELLSRTAPQLLPVNRVRDGSHPMPDIPHG) constitute a propeptide, removed in mature form; by autocatalysis. Thr53 serves as the catalytic Nucleophile.

The protein belongs to the peptidase T1B family. In terms of assembly, the 20S proteasome core is composed of 14 alpha and 14 beta subunits that assemble into four stacked heptameric rings, resulting in a barrel-shaped structure. The two inner rings, each composed of seven catalytic beta subunits, are sandwiched by two outer rings, each composed of seven alpha subunits. The catalytic chamber with the active sites is on the inside of the barrel. Has a gated structure, the ends of the cylinder being occluded by the N-termini of the alpha-subunits. Is capped by the proteasome-associated ATPase, ARC.

It is found in the cytoplasm. It carries out the reaction Cleavage of peptide bonds with very broad specificity.. The protein operates within protein degradation; proteasomal Pup-dependent pathway. The formation of the proteasomal ATPase ARC-20S proteasome complex, likely via the docking of the C-termini of ARC into the intersubunit pockets in the alpha-rings, may trigger opening of the gate for substrate entry. Interconversion between the open-gate and close-gate conformations leads to a dynamic regulation of the 20S proteasome proteolysis activity. Functionally, component of the proteasome core, a large protease complex with broad specificity involved in protein degradation. The protein is Proteasome subunit beta 2 of Thermomonospora curvata (strain ATCC 19995 / DSM 43183 / JCM 3096 / KCTC 9072 / NBRC 15933 / NCIMB 10081 / Henssen B9).